The chain runs to 351 residues: Photosystem II D2 protein (351 aa).

Residues 39–59 (TAYLAVGGWMTGTTFVTSWYT) traverse the membrane as a helical segment. H116 is a binding site for chlorophyll a. The chain crosses the membrane as a helical span at residues 123–139 (GFCLRQFEIARLVGIRP). Residues Q128 and N141 each contribute to the pheophytin a site. The chain crosses the membrane as a helical span at residues 151 to 164 (VFVSVFLLYPLGQA). Residue H196 coordinates chlorophyll a. The helical transmembrane segment at 206–226 (GALLCAIHGATVENTLFEDGD) threads the bilayer. A plastoquinone is bound by residues H213 and F260. H213 contributes to the Fe cation binding site. A Fe cation-binding site is contributed by H267. The chain crosses the membrane as a helical span at residues 277 to 293 (GLWTSAIGIVGLALNLR).

This sequence belongs to the reaction center PufL/M/PsbA/D family. PSII is composed of 1 copy each of membrane proteins PsbA, PsbB, PsbC, PsbD, PsbE, PsbF, PsbH, PsbI, PsbJ, PsbK, PsbL, PsbM, PsbT, PsbX, PsbY, PsbZ, Psb30/Ycf12, at least 3 peripheral proteins of the oxygen-evolving complex and a large number of cofactors. It forms dimeric complexes. The D1/D2 heterodimer binds P680, chlorophylls that are the primary electron donor of PSII, and subsequent electron acceptors. It shares a non-heme iron and each subunit binds pheophytin, quinone, additional chlorophylls, carotenoids and lipids. There is also a Cl(-1) ion associated with D1 and D2, which is required for oxygen evolution. The PSII complex binds additional chlorophylls, carotenoids and specific lipids. serves as cofactor.

The protein localises to the plastid. Its subcellular location is the chloroplast thylakoid membrane. The enzyme catalyses 2 a plastoquinone + 4 hnu + 2 H2O = 2 a plastoquinol + O2. In terms of biological role, photosystem II (PSII) is a light-driven water:plastoquinone oxidoreductase that uses light energy to abstract electrons from H(2)O, generating O(2) and a proton gradient subsequently used for ATP formation. It consists of a core antenna complex that captures photons, and an electron transfer chain that converts photonic excitation into a charge separation. The D1/D2 (PsbA/PsbD) reaction center heterodimer binds P680, the primary electron donor of PSII as well as several subsequent electron acceptors. D2 is needed for assembly of a stable PSII complex. This is Photosystem II D2 protein from Phaeodactylum tricornutum (strain CCAP 1055/1).